A 382-amino-acid chain; its full sequence is Beta-lactamase CMY-1 (382 aa).

The signal sequence occupies residues 1-23 (MQQRQSILWGAVATLMWAGLAHA). Ser-88 functions as the Acyl-ester intermediate in the catalytic mechanism. Ser-88, Gln-144, Tyr-174, Asn-176, and Asn-363 together coordinate a beta-lactam.

The protein belongs to the class-C beta-lactamase family.

It carries out the reaction a beta-lactam + H2O = a substituted beta-amino acid. With respect to regulation, inhibited by the beta-lactamase-blocking agent sulbactam. Its function is as follows. Class C beta-lactamase which confers resistance to penicillins and cephalosporins. Has benzylpenicillin- and cefalotin-hydrolyzing activities. Has weak cefuroxime, cefotaxime, cefoxitin, imipenem and oxacillin-hydrolyzing activities. The protein is Beta-lactamase CMY-1 of Klebsiella pneumoniae.